The chain runs to 467 residues: tRNA modification GTPase MnmE (467 aa).

3 residues coordinate (6S)-5-formyl-5,6,7,8-tetrahydrofolate: Arg25, Glu87, and Lys130. In terms of domain architecture, TrmE-type G spans Gly226–Gly389. Residue Asn236 coordinates K(+). Residues Asn236–Ser241, Thr255–Thr261, and Asp280–Gly283 contribute to the GTP site. Ser240 lines the Mg(2+) pocket. Thr255, Ile257, and Thr260 together coordinate K(+). Thr261 lines the Mg(2+) pocket. Lys467 is a binding site for (6S)-5-formyl-5,6,7,8-tetrahydrofolate.

The protein belongs to the TRAFAC class TrmE-Era-EngA-EngB-Septin-like GTPase superfamily. TrmE GTPase family. Homodimer. Heterotetramer of two MnmE and two MnmG subunits. The cofactor is K(+).

It is found in the cytoplasm. Functionally, exhibits a very high intrinsic GTPase hydrolysis rate. Involved in the addition of a carboxymethylaminomethyl (cmnm) group at the wobble position (U34) of certain tRNAs, forming tRNA-cmnm(5)s(2)U34. The chain is tRNA modification GTPase MnmE from Burkholderia mallei (strain NCTC 10247).